Consider the following 550-residue polypeptide: Cytokinin dehydrogenase 10 (550 aa).

The N-terminal stretch at Met-1–Pro-26 is a signal peptide. The FAD-binding PCMH-type domain occupies Val-64–Ala-245. Gly-100, Lys-101, and Gly-102 together coordinate FAD. Pros-8alpha-FAD histidine is present on His-103. Residues Ser-104, Gln-108, Asp-169, Thr-174, Ser-180, Ile-184, and Ile-235 each coordinate FAD. Asn-289 carries an N-linked (GlcNAc...) asparagine glycan. FAD-binding residues include Tyr-489, Ser-524, and Gln-527. Residues Leu-523–Ser-550 form a disordered region. Residues Phe-530–Ala-543 are compositionally biased toward pro residues.

Belongs to the oxygen-dependent FAD-linked oxidoreductase family. As to quaternary structure, monomer. It depends on FAD as a cofactor.

The protein resides in the secreted. The protein localises to the extracellular space. It carries out the reaction N(6)-dimethylallyladenine + A + H2O = 3-methyl-2-butenal + adenine + AH2. Its function is as follows. Catalyzes the oxidation of cytokinins, a family of N(6)-substituted adenine derivatives that are plant hormones, where the substituent is an isopentenyl group. The protein is Cytokinin dehydrogenase 10 (CKX10) of Oryza sativa subsp. japonica (Rice).